The chain runs to 348 residues: Phosphate acyltransferase (348 aa).

Belongs to the PlsX family. As to quaternary structure, homodimer. Probably interacts with PlsY.

It is found in the cytoplasm. It carries out the reaction a fatty acyl-[ACP] + phosphate = an acyl phosphate + holo-[ACP]. Its pathway is lipid metabolism; phospholipid metabolism. In terms of biological role, catalyzes the reversible formation of acyl-phosphate (acyl-PO(4)) from acyl-[acyl-carrier-protein] (acyl-ACP). This enzyme utilizes acyl-ACP as fatty acyl donor, but not acyl-CoA. The polypeptide is Phosphate acyltransferase (Oenococcus oeni (strain ATCC BAA-331 / PSU-1)).